A 463-amino-acid chain; its full sequence is 23S rRNA (uracil(1939)-C(5))-methyltransferase RlmD (463 aa).

Residues 6-76 (KSRKPQQPEY…KRLEEAEMVE (71 aa)) enclose the TRAM domain. [4Fe-4S] cluster-binding residues include Cys-90, Cys-96, Cys-99, and Cys-178. Residues Gln-288, Phe-317, Asn-322, Glu-341, Asp-368, and Asp-389 each contribute to the S-adenosyl-L-methionine site. The active-site Nucleophile is Cys-415.

Belongs to the class I-like SAM-binding methyltransferase superfamily. RNA M5U methyltransferase family. RlmD subfamily.

It catalyses the reaction uridine(1939) in 23S rRNA + S-adenosyl-L-methionine = 5-methyluridine(1939) in 23S rRNA + S-adenosyl-L-homocysteine + H(+). Functionally, catalyzes the formation of 5-methyl-uridine at position 1939 (m5U1939) in 23S rRNA. The protein is 23S rRNA (uracil(1939)-C(5))-methyltransferase RlmD of Acinetobacter baumannii (strain AYE).